Consider the following 361-residue polypeptide: Probable mannose-1-phosphate guanylyltransferase 2 (361 aa).

L6 and V7 together coordinate GDP-alpha-D-mannose. 5 residues coordinate diphosphate: G9, G11, T12, R13, and K23. G85, N109, D111, G146, and N173 together coordinate GDP-alpha-D-mannose.

The protein belongs to the transferase hexapeptide repeat family.

It carries out the reaction alpha-D-mannose 1-phosphate + GTP + H(+) = GDP-alpha-D-mannose + diphosphate. It functions in the pathway nucleotide-sugar biosynthesis; GDP-alpha-D-mannose biosynthesis; GDP-alpha-D-mannose from alpha-D-mannose 1-phosphate (GTP route): step 1/1. Its function is as follows. Catalyzes a reaction of the Smirnoff-Wheeler pathway, the major route to ascorbate biosynthesis in plants. The sequence is that of Probable mannose-1-phosphate guanylyltransferase 2 from Oryza sativa subsp. japonica (Rice).